We begin with the raw amino-acid sequence, 171 residues long: RxLR effector protein CRE7 (171 aa).

The signal sequence occupies residues Met1–Ala23. Positions Arg46–Arg59 match the RxLR-dEER motif.

The protein belongs to the RxLR effector family.

Its subcellular location is the secreted. The protein resides in the host cell. Its function is as follows. Effector that is involved in host plant infection. Contributes to virulence during the early infection stage, by inhibiting plant defense responses induced by both PAMP-triggered immunity (PTI) and effector-triggered immunity (ETI). This Phytophthora infestans (strain T30-4) (Potato late blight agent) protein is RxLR effector protein CRE7.